A 671-amino-acid polypeptide reads, in one-letter code: UvrABC system protein B (671 aa).

The 388-residue stretch at 25 to 412 (EGIDAGLAHQ…AGRVVEQVVR (388 aa)) folds into the Helicase ATP-binding domain. 38 to 45 (GVTGSGKT) contributes to the ATP binding site. Positions 91–114 (YYDYYQPEAYVPSSDTFIEKDASI) match the Beta-hairpin motif. The Helicase C-terminal domain maps to 429-595 (QVDDLLSEIH…GVFKDVADIM (167 aa)). Positions 600 to 624 (VPGSRSKKRKGMAKAAEENARYENE) are disordered. Positions 614–624 (AAEENARYENE) are enriched in basic and acidic residues. The UVR domain maps to 632–667 (NKRIRQLEEKMYQLARDLEFEAAAQMRDEIGKLRER).

This sequence belongs to the UvrB family. As to quaternary structure, forms a heterotetramer with UvrA during the search for lesions. Interacts with UvrC in an incision complex.

The protein localises to the cytoplasm. The UvrABC repair system catalyzes the recognition and processing of DNA lesions. A damage recognition complex composed of 2 UvrA and 2 UvrB subunits scans DNA for abnormalities. Upon binding of the UvrA(2)B(2) complex to a putative damaged site, the DNA wraps around one UvrB monomer. DNA wrap is dependent on ATP binding by UvrB and probably causes local melting of the DNA helix, facilitating insertion of UvrB beta-hairpin between the DNA strands. Then UvrB probes one DNA strand for the presence of a lesion. If a lesion is found the UvrA subunits dissociate and the UvrB-DNA preincision complex is formed. This complex is subsequently bound by UvrC and the second UvrB is released. If no lesion is found, the DNA wraps around the other UvrB subunit that will check the other stand for damage. This is UvrABC system protein B from Pseudomonas savastanoi pv. phaseolicola (strain 1448A / Race 6) (Pseudomonas syringae pv. phaseolicola (strain 1448A / Race 6)).